The primary structure comprises 364 residues: MKMSFRWYGKHDPVSLEEIKAIPGMQGIVTAVYDVPVGQAWPLENILELKRTVEAAGLEISVIESIPVHEDIKQGKPNRDELIENYKTSISNVGKAGIPVVCYNFMPVFDWTRSDLNYPLPDGSTSLAFLKADLADVDPVADDLNLPGWDSSYSKEEMKAIIEHYRHHISEEDLWANLDYFIKAIMPTAEAAGVKMAIHPDDPPYGIFGLPRIITGQKAVERFLDLYDSPNNGITMCVGSYASDPQNDVIAMTEYALKRQRINFMHTRNVTAGDWGFQETAHLSQAGDIDMNAIIKLLVDYDWQGPLRPDHGRRIWGDQTKTPGYGLYDRALGATYFNGLYEANMRAAGKTPDFGITVKTVGDK.

Belongs to the mannonate dehydratase family. Fe(2+) is required as a cofactor. The cofactor is Mn(2+).

The catalysed reaction is D-mannonate = 2-dehydro-3-deoxy-D-gluconate + H2O. It functions in the pathway carbohydrate metabolism; pentose and glucuronate interconversion. Catalyzes the dehydration of D-mannonate. This chain is Mannonate dehydratase, found in Streptococcus equi subsp. zooepidemicus (strain MGCS10565).